A 369-amino-acid polypeptide reads, in one-letter code: GDSL esterase/lipase At5g41890 (369 aa).

The active-site Nucleophile is the Ser32. Residues Asp334 and His337 contribute to the active site.

Belongs to the 'GDSL' lipolytic enzyme family.

This chain is GDSL esterase/lipase At5g41890, found in Arabidopsis thaliana (Mouse-ear cress).